The chain runs to 887 residues: Alanine--tRNA ligase (887 aa).

Residues histidine 581, histidine 585, cysteine 683, and histidine 687 each coordinate Zn(2+).

Belongs to the class-II aminoacyl-tRNA synthetase family. Requires Zn(2+) as cofactor.

It is found in the cytoplasm. It catalyses the reaction tRNA(Ala) + L-alanine + ATP = L-alanyl-tRNA(Ala) + AMP + diphosphate. Catalyzes the attachment of alanine to tRNA(Ala) in a two-step reaction: alanine is first activated by ATP to form Ala-AMP and then transferred to the acceptor end of tRNA(Ala). Also edits incorrectly charged Ser-tRNA(Ala) and Gly-tRNA(Ala) via its editing domain. The protein is Alanine--tRNA ligase of Ehrlichia canis (strain Jake).